We begin with the raw amino-acid sequence, 474 residues long: Proline--tRNA ligase (474 aa).

It belongs to the class-II aminoacyl-tRNA synthetase family. ProS type 3 subfamily. As to quaternary structure, homodimer.

The protein resides in the cytoplasm. The catalysed reaction is tRNA(Pro) + L-proline + ATP = L-prolyl-tRNA(Pro) + AMP + diphosphate. Catalyzes the attachment of proline to tRNA(Pro) in a two-step reaction: proline is first activated by ATP to form Pro-AMP and then transferred to the acceptor end of tRNA(Pro). The sequence is that of Proline--tRNA ligase from Mycoplasma capricolum subsp. capricolum (strain California kid / ATCC 27343 / NCTC 10154).